A 467-amino-acid polypeptide reads, in one-letter code: MTTFQELGLSQEVMKAIERMGFEETTPIQAKTIPLSLQNKDVIGQAQTGTGKTAAFGIPIVEKVNVKNSAVQALVVAPTRELAIQVSEELYKIGAVKRVRVLPIYGGQDIERQIRALKKHPHVIVGTPGRIIDHINRGTLRLEHVHTVVLDEADEMLNMGFIEDIEAILSHVPAERQTLLFSATMPDPIRRIAERFMNEPELVKVKAKEMTVPNIQQYYLEVHEKKKFDILTRLLDIQAPELAIVFGRTKRRVDELAEALNLRGYAAEGIHGDLSQAKRLSVLRKFKEGAIEILVATDVAARGLDISGVTHVYNFDIPQDPESYVHRIGRTGRAGKTGVAMTFVTPREIGQLHHIERTTKRKMERMKPPTLDEALEGQQRIAIEKLLNVVETENLSFYKRAAEELLEEHDSVTIVAACLKMLTREPDTTPVQLTEEPPLAVKREKKRGGRPDGSARSRTKKRRITAH.

A Q motif motif is present at residues Thr2–Ala30. The Helicase ATP-binding domain occupies Ile33–Val203. Ala46 to Thr53 lines the ATP pocket. The DEAD box motif lies at Asp151–Asp154. One can recognise a Helicase C-terminal domain in the interval Asn214–Ala374. Residues Thr428–His467 are disordered. Over residues Ser457–His467 the composition is skewed to basic residues.

It belongs to the DEAD box helicase family. CshA subfamily. In terms of assembly, oligomerizes, may be a member of the RNA degradosome.

The protein localises to the cytoplasm. The enzyme catalyses ATP + H2O = ADP + phosphate + H(+). DEAD-box RNA helicase possibly involved in RNA degradation. Unwinds dsRNA in both 5'- and 3'-directions, has RNA-dependent ATPase activity. The sequence is that of DEAD-box ATP-dependent RNA helicase CshA from Geobacillus kaustophilus (strain HTA426).